Consider the following 249-residue polypeptide: ATP synthase subunit a, chloroplastic (249 aa).

A run of 5 helical transmembrane segments spans residues 40 to 60, 97 to 117, 136 to 156, 201 to 221, and 222 to 242; these read QVLI…VLAV, VPFI…GALL, INTT…AGLS, LVVV…VMFL, and GLFT…AYIG.

The protein belongs to the ATPase A chain family. In terms of assembly, F-type ATPases have 2 components, CF(1) - the catalytic core - and CF(0) - the membrane proton channel. CF(1) has five subunits: alpha(3), beta(3), gamma(1), delta(1), epsilon(1). CF(0) has four main subunits: a, b, b' and c.

It localises to the plastid. The protein resides in the chloroplast thylakoid membrane. Key component of the proton channel; it plays a direct role in the translocation of protons across the membrane. The chain is ATP synthase subunit a, chloroplastic from Arabis hirsuta (Hairy rock-cress).